Reading from the N-terminus, the 185-residue chain is Elongation factor P (185 aa).

This sequence belongs to the elongation factor P family.

The protein localises to the cytoplasm. It participates in protein biosynthesis; polypeptide chain elongation. Involved in peptide bond synthesis. Stimulates efficient translation and peptide-bond synthesis on native or reconstituted 70S ribosomes in vitro. Probably functions indirectly by altering the affinity of the ribosome for aminoacyl-tRNA, thus increasing their reactivity as acceptors for peptidyl transferase. This Burkholderia vietnamiensis (strain G4 / LMG 22486) (Burkholderia cepacia (strain R1808)) protein is Elongation factor P.